The sequence spans 246 residues: Neuromodulin (246 aa).

Positions 1 to 246 (MLCCMRRTKQ…EESKADQENA (246 aa)) are disordered. 2 S-palmitoyl cysteine lipidation sites follow: cysteine 3 and cysteine 4. The span at 9 to 33 (KQVEKNEDGDQKIEQDGIKPEDKAH) shows a compositional bias: basic and acidic residues. Positions 32-61 (AHKAATKIQASFRGHITRKKLKGEKKADAP) constitute an IQ domain. Low complexity-rich tracts occupy residues 87-99 (ASAA…ADSA) and 125-157 (SEQP…KAST). Residues 164 to 176 (KADEAQDKEEPKQ) show a composition bias toward basic and acidic residues. Residues 177-203 (ADVPAADTTATTTPAAEDATAKATAQP) show a composition bias toward low complexity. Basic and acidic residues-rich tracts occupy residues 213–225 (TEEK…ETKP) and 237–246 (EESKADQENA).

This sequence belongs to the neuromodulin family. As to quaternary structure, binds calmodulin with a greater affinity in the absence of Ca(2+) than in its presence. In terms of processing, palmitoylated. Palmitoylation is essential for plasma membrane association. Expressed in neurons.

It is found in the cell membrane. The protein localises to the cell projection. The protein resides in the growth cone membrane. It localises to the synapse. Its subcellular location is the filopodium membrane. In terms of biological role, this protein is associated with nerve growth. It is a major component of the motile 'growth cones' that form the tips of elongating axons. Plays a role in axonal and dendritic filopodia induction. The polypeptide is Neuromodulin (GAP43) (Gallus gallus (Chicken)).